Consider the following 157-residue polypeptide: Small ribosomal subunit protein uS7 (157 aa).

The protein belongs to the universal ribosomal protein uS7 family. In terms of assembly, part of the 30S ribosomal subunit. Contacts proteins S9 and S11.

Functionally, one of the primary rRNA binding proteins, it binds directly to 16S rRNA where it nucleates assembly of the head domain of the 30S subunit. Is located at the subunit interface close to the decoding center, probably blocks exit of the E-site tRNA. The polypeptide is Small ribosomal subunit protein uS7 (Paracidovorax citrulli (strain AAC00-1) (Acidovorax citrulli)).